The primary structure comprises 386 residues: Zinc finger protein 385A (386 aa).

A Matrin-type 1 zinc finger spans residues 74–98; it reads ISCNVCQIRFNSQSQAEAHYKGNRH. The segment at 88–193 is disordered; it reads QAEAHYKGNR…ASLPGGSKEE (106 aa). Residues 103–121 show a composition bias toward basic and acidic residues; the sequence is KGIEAAKTRGREPSVRESG. The necessary for binding to ITPR1, CEBPA and p53/TP53 mRNAs stretch occupies residues 145–351; the sequence is NGLGPAPGSP…AGSPLSLRPA (207 aa). Ser-185 carries the post-translational modification Phosphoserine. The Matrin-type 2 zinc finger occupies 201-225; the sequence is LYCALCKVAVNSLSQLEAHNKGTKH. Thr-248 is modified (phosphothreonine). A Matrin-type 3 zinc finger spans residues 261–285; the sequence is FHCEICNVKVNSEVQLKQHISSRRH. Positions 279-305 are disordered; sequence HISSRRHRDGVAGKPNPLLSRHKKPRG.

Interacts with p53/TP53; the interaction is direct and enhances p53/TP53 transactivation functions on cell-cycle arrest target genes, resulting in growth arrest. Interacts with ELAVL1; the interaction is indirect, mRNA-dependent and may regulate p53/TP53 expression. In terms of processing, ubiquitinated upon prolonged exposure to genotoxic stress, which leads to proteasomal degradation of ZNF385A and releases p53/TP53 from cell-cycle arrest target gene promoters. As to expression, expressed in brain and testis (at protein level). In brain, the expression is located to olfactory bulb, cerebral cortex, hippocampus, satellite cells and Purkinje cells of the cerebellum molecular layer. Detected in bone marrow, white and brown adipose tissue, lung and at lower levels in the thymus.

It localises to the cytoplasm. The protein localises to the nucleus. The protein resides in the nucleolus. Its subcellular location is the cell projection. It is found in the dendrite. Functionally, RNA-binding protein that affects the localization and the translation of a subset of mRNA. May play a role in adipogenesis through binding to the 3'-UTR of CEBPA mRNA and regulation of its translation. Targets ITPR1 mRNA to dendrites in Purkinje cells, and may regulate its activity-dependent translation. With ELAVL1, binds the 3'-UTR of p53/TP53 mRNAs to control their nuclear export induced by CDKN2A. Hence, may regulate p53/TP53 expression and mediate in part the CDKN2A anti-proliferative activity. May also bind CCNB1 mRNA. Alternatively, may also regulate p53/TP53 activity through direct protein-protein interaction. Interacts with p53/TP53 and promotes cell-cycle arrest over apoptosis enhancing preferentially the DNA binding and transactivation of p53/TP53 on cell-cycle arrest target genes over proapoptotic target genes. May also regulate the ubiquitination and stability of CDKN1A promoting DNA damage-induced cell cycle arrest. Also plays a role in megakaryocytes differentiation. This chain is Zinc finger protein 385A (Znf385a), found in Mus musculus (Mouse).